Reading from the N-terminus, the 69-residue chain is uncharacterized protein (69 aa).

A signal peptide spans 1–19 (MKRIWVSLMIAITACSAHA).

This is an uncharacterized protein from Pasteurella multocida (strain Pm70).